We begin with the raw amino-acid sequence, 76 residues long: UPF0291 protein GK1331 (76 aa).

Residues 57 to 76 (PSGNDVTPKKLKESQRRRFH) form a disordered region. The segment covering 63-76 (TPKKLKESQRRRFH) has biased composition (basic and acidic residues).

This sequence belongs to the UPF0291 family.

The protein localises to the cytoplasm. The chain is UPF0291 protein GK1331 from Geobacillus kaustophilus (strain HTA426).